The primary structure comprises 329 residues: NAD(P)H-dependent D-xylose reductase (329 aa).

The active-site Proton donor is the Tyr-52. His-114 provides a ligand contact to substrate. NAD(+)-binding positions include 173 to 174 (SN), 222 to 231 (SSFGPVSFLE), and 278 to 288 (KSSKKERLLDN).

It belongs to the aldo/keto reductase family.

The enzyme catalyses xylitol + NAD(+) = D-xylose + NADH + H(+). It carries out the reaction xylitol + NADP(+) = D-xylose + NADPH + H(+). It functions in the pathway carbohydrate metabolism; D-xylose degradation. Reduces D-xylose into xylitol. This chain is NAD(P)H-dependent D-xylose reductase (XYL1), found in Kluyveromyces lactis (strain ATCC 8585 / CBS 2359 / DSM 70799 / NBRC 1267 / NRRL Y-1140 / WM37) (Yeast).